A 288-amino-acid chain; its full sequence is Structure-specific endonuclease subunit SLX1 (288 aa).

Residues 7-90 (PFYGVYLLQS…QHPNMTRLIT (84 aa)) enclose the GIY-YIG domain.

Belongs to the SLX1 family. In terms of assembly, forms a heterodimer with SLX4. It depends on a divalent metal cation as a cofactor.

It is found in the nucleus. Catalytic subunit of the SLX1-SLX4 structure-specific endonuclease that resolves DNA secondary structures generated during DNA repair and recombination. Has endonuclease activity towards branched DNA substrates, introducing single-strand cuts in duplex DNA close to junctions with ss-DNA. The polypeptide is Structure-specific endonuclease subunit SLX1 (Yarrowia lipolytica (strain CLIB 122 / E 150) (Yeast)).